Here is a 116-residue protein sequence, read N- to C-terminus: S-adenosylmethionine decarboxylase proenzyme (116 aa).

Serine 63 (schiff-base intermediate with substrate; via pyruvic acid) is an active-site residue. Serine 63 is modified (pyruvic acid (Ser); by autocatalysis). The Proton acceptor; for processing activity role is filled by histidine 68. Cysteine 83 acts as the Proton donor; for catalytic activity in catalysis.

The protein belongs to the prokaryotic AdoMetDC family. Type 1 subfamily. In terms of assembly, heterotetramer of two alpha and two beta chains arranged as a dimer of alpha/beta heterodimers. Requires pyruvate as cofactor. Is synthesized initially as an inactive proenzyme. Formation of the active enzyme involves a self-maturation process in which the active site pyruvoyl group is generated from an internal serine residue via an autocatalytic post-translational modification. Two non-identical subunits are generated from the proenzyme in this reaction, and the pyruvate is formed at the N-terminus of the alpha chain, which is derived from the carboxyl end of the proenzyme. The post-translation cleavage follows an unusual pathway, termed non-hydrolytic serinolysis, in which the side chain hydroxyl group of the serine supplies its oxygen atom to form the C-terminus of the beta chain, while the remainder of the serine residue undergoes an oxidative deamination to produce ammonia and the pyruvoyl group blocking the N-terminus of the alpha chain.

It carries out the reaction S-adenosyl-L-methionine + H(+) = S-adenosyl 3-(methylsulfanyl)propylamine + CO2. It participates in amine and polyamine biosynthesis; S-adenosylmethioninamine biosynthesis; S-adenosylmethioninamine from S-adenosyl-L-methionine: step 1/1. Functionally, catalyzes the decarboxylation of S-adenosylmethionine to S-adenosylmethioninamine (dcAdoMet), the propylamine donor required for the synthesis of the polyamines spermine and spermidine from the diamine putrescine. In Clostridium botulinum (strain 657 / Type Ba4), this protein is S-adenosylmethionine decarboxylase proenzyme.